We begin with the raw amino-acid sequence, 156 residues long: Small ribosomal subunit protein uS7 (156 aa).

The protein belongs to the universal ribosomal protein uS7 family. Part of the 30S ribosomal subunit. Contacts proteins S9 and S11.

Its function is as follows. One of the primary rRNA binding proteins, it binds directly to 16S rRNA where it nucleates assembly of the head domain of the 30S subunit. Is located at the subunit interface close to the decoding center, probably blocks exit of the E-site tRNA. The polypeptide is Small ribosomal subunit protein uS7 (Sorangium cellulosum (strain So ce56) (Polyangium cellulosum (strain So ce56))).